The sequence spans 275 residues: Collectin-10 (275 aa).

The signal sequence occupies residues 1-25 (MKYGKLWPIGVSVLGVIALHVRVLS). N-linked (GlcNAc...) asparagine glycosylation is present at Asn-30. The interval 39–76 (THTILPGPKGDDGEAGDTGVLGKLGKDGPKGQKGNKGI) is disordered. A Collagen-like domain is found at 51-110 (GEAGDTGVLGKLGKDGPKGQKGNKGIIGDSGDLGLIGKIGPIGSKGDKGHKGLPGLPGGK). The region spanning 153-269 (TDEKYYYIVR…CSLTIYFVCE (117 aa)) is the C-type lectin domain. Intrachain disulfides connect Cys-174–Cys-268 and Cys-246–Cys-260.

This sequence belongs to the COLEC10/COLEC11 family.

The protein resides in the secreted. Lectin that binds to various sugars: galactose &gt; mannose = fucose &gt; N-acetylglucosamine &gt; N-acetylgalactosamine. In Xenopus tropicalis (Western clawed frog), this protein is Collectin-10 (colec10).